The primary structure comprises 274 residues: Ribosomal RNA small subunit methyltransferase A (274 aa).

Residues asparagine 17, leucine 19, glycine 44, glutamate 65, aspartate 89, and asparagine 111 each coordinate S-adenosyl-L-methionine.

The protein belongs to the class I-like SAM-binding methyltransferase superfamily. rRNA adenine N(6)-methyltransferase family. RsmA subfamily.

Its subcellular location is the cytoplasm. The catalysed reaction is adenosine(1518)/adenosine(1519) in 16S rRNA + 4 S-adenosyl-L-methionine = N(6)-dimethyladenosine(1518)/N(6)-dimethyladenosine(1519) in 16S rRNA + 4 S-adenosyl-L-homocysteine + 4 H(+). Specifically dimethylates two adjacent adenosines (A1518 and A1519) in the loop of a conserved hairpin near the 3'-end of 16S rRNA in the 30S particle. May play a critical role in biogenesis of 30S subunits. This Buchnera aphidicola subsp. Schizaphis graminum (strain Sg) protein is Ribosomal RNA small subunit methyltransferase A.